The chain runs to 363 residues: UDP-N-acetylglucosamine--N-acetylmuramyl-(pentapeptide) pyrophosphoryl-undecaprenol N-acetylglucosamine transferase (363 aa).

UDP-N-acetyl-alpha-D-glucosamine-binding positions include 14 to 16 (TGG), asparagine 122, arginine 163, serine 190, and glutamine 285.

Belongs to the glycosyltransferase 28 family. MurG subfamily.

It is found in the cell inner membrane. The catalysed reaction is di-trans,octa-cis-undecaprenyl diphospho-N-acetyl-alpha-D-muramoyl-L-alanyl-D-glutamyl-meso-2,6-diaminopimeloyl-D-alanyl-D-alanine + UDP-N-acetyl-alpha-D-glucosamine = di-trans,octa-cis-undecaprenyl diphospho-[N-acetyl-alpha-D-glucosaminyl-(1-&gt;4)]-N-acetyl-alpha-D-muramoyl-L-alanyl-D-glutamyl-meso-2,6-diaminopimeloyl-D-alanyl-D-alanine + UDP + H(+). It participates in cell wall biogenesis; peptidoglycan biosynthesis. Cell wall formation. Catalyzes the transfer of a GlcNAc subunit on undecaprenyl-pyrophosphoryl-MurNAc-pentapeptide (lipid intermediate I) to form undecaprenyl-pyrophosphoryl-MurNAc-(pentapeptide)GlcNAc (lipid intermediate II). In Prochlorococcus marinus (strain AS9601), this protein is UDP-N-acetylglucosamine--N-acetylmuramyl-(pentapeptide) pyrophosphoryl-undecaprenol N-acetylglucosamine transferase.